The sequence spans 882 residues: MSSGSLSSIRKKFLEFFVKNGHKLYASAPLVATGDASLLFTSAGMVPFKQAFTSGSSVDGAKTAVSSQKCLRAGGKHNDLENVGYTNRHHTFFEMLGNFSFGDYFKERAIELAWRFVTEEMCLSKDRLWITVYSEDQEAFDIWKKITGFPDDRIIKISTSDNFWSMGDTGPCGPCSEIFYDYGEHVQGGPPGSKDADGPRFTEVWNLVFMQFCRDEHGELNPLPHKCIDTGMGLERAAAVVQGVCDNYDTDLFKAVIRKSQDVFGSPDNSIAHRVIADHIRAAAFLISEGLSPGNEGRNYVLRRIIRRAVRYAYQLDPSNVAIHEVLPVLTKEGSAGYMGDAYPELVRCEQSITSTLRSEGEGFVDTLRRGMALLEKEIGGLSPGQVLLGDVAFKLYDTFGFPLDITLDIAKERGLKFDQEGFNKGMGEQKARSRKHWVGSGEDASHRLWEELQAQHKNTRFVGYDCCSTKASVLSITRDGMAVQSVNSGEKACLLLDVSPFYAESGGQEGDKGSITGVSGVKNSGGANIAEVTYTRKASNLHIHECTITSGVFNVGDTVDAAIDVDRRERLKANHSATHILHSVLRTHIDGNIQQKGSLVAEDKLRFDFNYASALTKEQIALIEREVNRRIMSNKPVLTDHCSFEAAVQGGAIALFGEKYSEHSVRVVSMGDSKELCGGTHVRYTGDIGAFKIVSESGIALGVRRIEAITGQSVVDGLRKDGDILLHISERLGVPVGEVSEGLERLLKEKLELKKKLVCAWHEIIKSSISPVNCGAGVVLHCGYFPTIPVDAIMEFMKSARKAERGIFAIATAVDGKAVLIIGVGDTASKVLGASELVKTLADLQGKGGGNAGLARVSLEVGNVQEALSTILNKVTAAFPT.

Residues His-576, His-580, Cys-678, and His-682 each coordinate Zn(2+).

Belongs to the class-II aminoacyl-tRNA synthetase family. The cofactor is Zn(2+).

The protein localises to the cytoplasm. It carries out the reaction tRNA(Ala) + L-alanine + ATP = L-alanyl-tRNA(Ala) + AMP + diphosphate. Catalyzes the attachment of alanine to tRNA(Ala) in a two-step reaction: alanine is first activated by ATP to form Ala-AMP and then transferred to the acceptor end of tRNA(Ala). Also edits incorrectly charged Ser-tRNA(Ala) and Gly-tRNA(Ala) via its editing domain. The sequence is that of Alanine--tRNA ligase from Anaplasma marginale (strain St. Maries).